Here is a 308-residue protein sequence, read N- to C-terminus: Ribosomal RNA small subunit methyltransferase H (308 aa).

Residues 35–37 (GGH), aspartate 55, phenylalanine 79, aspartate 100, and glutamine 107 contribute to the S-adenosyl-L-methionine site.

The protein belongs to the methyltransferase superfamily. RsmH family.

It localises to the cytoplasm. It carries out the reaction cytidine(1402) in 16S rRNA + S-adenosyl-L-methionine = N(4)-methylcytidine(1402) in 16S rRNA + S-adenosyl-L-homocysteine + H(+). Functionally, specifically methylates the N4 position of cytidine in position 1402 (C1402) of 16S rRNA. This is Ribosomal RNA small subunit methyltransferase H from Dechloromonas aromatica (strain RCB).